The chain runs to 641 residues: MTTPALLPLSGRRIPPLNLGPPSFPHHRATLRLSEKFILLLILSAFITLCFGAFFFLPDSSKHKRFDLGLEDVLIPHVDAGKGAKNPGVFLIHGPDEHRHREEEERLRNKIRADHEKALEEAKEKLRKSREEIRAEIQTEKNKVAQAMKTKETRVLPPVPVPQRVGVSGGDPEDMEIKKKRDKIKEMMKHAWDNYRTYGWGHNELRPIARKGHSTNIFGSSQMGATIVDALDTLYIMGLHDEFMDGQRWIEENLDFSVNSEVSVFEVNIRFIGGLLAAYYLSGEEIFKTKAVQLAEKLLPAFNTPTGIPWAMVNLKSGVGRNWGWASAGSSILAEFGTLHMEFVHLSYLTGDLTYYNKVMHIRKLLQKMERPNGLYPNYLNPRTGRWGQYHTSVGGLGDSFYEYLLKAWLMSDKTDHEARRMYDDAVEAIEKHLIKKSRGGLVFIGEWKNGHLERKMGHLACFAGGMFALGADGSRKDKAGHYLELGAEIARTCHESYDRTALKLGPESFKFDGAVEAVAVRQAEKYYILRPEVIETYWYLWRFTHDPRYRQWGWEAALAIEKSCRVSGGFSGVKDVYAPTPVHDDVQQSFFLAETLKYLYLLFSGDDLLPLDHWVFNTEAHPLPVLRLANSTLSGNPAVR.

N-acetylthreonine is present on T2. At 2–36 the chain is on the cytoplasmic side; it reads TTPALLPLSGRRIPPLNLGPPSFPHHRATLRLSEK. The chain crosses the membrane as a helical; Signal-anchor for type II membrane protein span at residues 37 to 57; it reads FILLLILSAFITLCFGAFFFL. At 58–641 the chain is on the lumenal side; it reads PDSSKHKRFD…STLSGNPAVR (584 aa). A disulfide bridge connects residues C462 and C494. E508 acts as the Proton donor in catalysis. Position 619 (T619) interacts with Ca(2+). N631 is a glycosylation site (N-linked (GlcNAc...) asparagine).

It belongs to the glycosyl hydrolase 47 family. The cofactor is Ca(2+).

The protein localises to the golgi apparatus membrane. The enzyme catalyses N(4)-(alpha-D-Man-(1-&gt;2)-alpha-D-Man-(1-&gt;2)-alpha-D-Man-(1-&gt;3)-[alpha-D-Man-(1-&gt;2)-alpha-D-Man-(1-&gt;3)-[alpha-D-Man-(1-&gt;2)-alpha-D-Man-(1-&gt;6)]-alpha-D-Man-(1-&gt;6)]-beta-D-Man-(1-&gt;4)-beta-D-GlcNAc-(1-&gt;4)-beta-D-GlcNAc)-L-asparaginyl-[protein] (N-glucan mannose isomer 9A1,2,3B1,2,3) + 4 H2O = N(4)-(alpha-D-Man-(1-&gt;3)-[alpha-D-Man-(1-&gt;3)-[alpha-D-Man-(1-&gt;6)]-alpha-D-Man-(1-&gt;6)]-beta-D-Man-(1-&gt;4)-beta-D-GlcNAc-(1-&gt;4)-beta-D-GlcNAc)-L-asparaginyl-[protein] (N-glucan mannose isomer 5A1,2) + 4 beta-D-mannose. It carries out the reaction N(4)-(alpha-D-Man-(1-&gt;2)-alpha-D-Man-(1-&gt;2)-alpha-D-Man-(1-&gt;3)-[alpha-D-Man-(1-&gt;3)-[alpha-D-Man-(1-&gt;2)-alpha-D-Man-(1-&gt;6)]-alpha-D-Man-(1-&gt;6)]-beta-D-Man-(1-&gt;4)-beta-D-GlcNAc-(1-&gt;4)-beta-D-GlcNAc)-L-asparaginyl-[protein] (N-glucan mannose isomer 8A1,2,3B1,3) + 3 H2O = N(4)-(alpha-D-Man-(1-&gt;3)-[alpha-D-Man-(1-&gt;3)-[alpha-D-Man-(1-&gt;6)]-alpha-D-Man-(1-&gt;6)]-beta-D-Man-(1-&gt;4)-beta-D-GlcNAc-(1-&gt;4)-beta-D-GlcNAc)-L-asparaginyl-[protein] (N-glucan mannose isomer 5A1,2) + 3 beta-D-mannose. It participates in protein modification; protein glycosylation. Inhibited by both 1-deoxymannojirimycin and kifunensine. Involved in the maturation of Asn-linked oligosaccharides. Progressively trim alpha-1,2-linked mannose residues from Man(9)GlcNAc(2) to produce Man(5)GlcNAc(2). In Mus musculus (Mouse), this protein is Mannosyl-oligosaccharide 1,2-alpha-mannosidase IB (Man1a2).